Consider the following 419-residue polypeptide: Multidrug efflux pump Tap (419 aa).

Helical transmembrane passes span 7–29 (GPAF…SIVA), 44–66 (ASIV…GTAV), 73–95 (RVSM…VAWG), 100–122 (AVNV…AGMT), 149–171 (ILNL…VGGI), 175–197 (WITA…EGAG), 218–240 (FVWN…ALYL), 260–282 (LGWA…AVLA), 289–308 (VTMS…IAFL), 313–335 (VIMV…YNYV), 348–370 (VVGV…AGPL), and 375–397 (GLHA…AIRL).

It belongs to the major facilitator superfamily. Drug:H(+) antiporter-3 (DHA3) (TC 2.A.1.21) family.

The protein localises to the cell inner membrane. Inhibited by piperine, verapamil and verapamil analogs. Functionally, efflux pump that contributes to intrinsic antibiotic resistance. The pump uses the electrochemical gradient as a source of energy. Confers resistance to rifampicin. Confers low-level resistance to tetracycline and to several aminoglycosides, including streptomycin, gentamicin, 2'-N-ethylnetilmicin and 6'-N-ethylnetilmicin. The chain is Multidrug efflux pump Tap from Mycobacterium tuberculosis (strain ATCC 25618 / H37Rv).